The primary structure comprises 131 residues: Cytochrome b5 (131 aa).

In terms of domain architecture, Cytochrome b5 heme-binding spans 3–79 (AKIFSLDEVS…LEEYLIGSLD (77 aa)). Residues His-38 and His-62 each contribute to the heme site. A helical membrane pass occupies residues 108-125 (IILPALAIIGALVYKYVI).

Belongs to the cytochrome b5 family.

It is found in the endoplasmic reticulum membrane. The protein resides in the microsome membrane. Membrane bound hemoprotein which function as an electron carrier for several membrane bound oxygenases. The polypeptide is Cytochrome b5 (Rhizopus stolonifer (Rhizopus nigricans)).